A 316-amino-acid polypeptide reads, in one-letter code: uncharacterized protein (316 aa).

In terms of domain architecture, S4 RNA-binding spans 16–89; it reads ERLDKFLARA…IPINIIYEDE (74 aa). The active site involves Asp-140.

It belongs to the pseudouridine synthase RluA family.

It carries out the reaction a uridine in RNA = a pseudouridine in RNA. This is an uncharacterized protein from Aquifex aeolicus (strain VF5).